The sequence spans 150 residues: MMIAENAPFWRRKTLEQLSPQEWEALCDGCGLCCLQKLEDEDDNSVYYTRIACKLLDLDSCQCSDYPNRFAQVPDCIQLTPGKADQFKWLPSTCGYRLVSEGKDLPAWHHLVCGDRQQVHEQRISQSGRMLREQDVHEDDWEDHLIFRAS.

This sequence belongs to the UPF0260 family.

The protein is UPF0260 protein PputGB1_4117 of Pseudomonas putida (strain GB-1).